A 63-amino-acid polypeptide reads, in one-letter code: Large ribosomal subunit protein eL37 (63 aa).

Residues cysteine 20, cysteine 23, cysteine 35, and cysteine 38 each contribute to the Zn(2+) site. The C4-type zinc-finger motif lies at 20-38 (CRRCGHHSFNVRKGYCAHC).

It belongs to the eukaryotic ribosomal protein eL37 family. The cofactor is Zn(2+).

Its function is as follows. Binds to the 23S rRNA. The protein is Large ribosomal subunit protein eL37 of Thermofilum pendens (strain DSM 2475 / Hrk 5).